The chain runs to 55 residues: Large ribosomal subunit protein bL33 (55 aa).

Belongs to the bacterial ribosomal protein bL33 family.

The sequence is that of Large ribosomal subunit protein bL33 from Kocuria rhizophila (strain ATCC 9341 / DSM 348 / NBRC 103217 / DC2201).